A 266-amino-acid chain; its full sequence is Chymotrypsin-like elastase family member 1 (266 aa).

The signal sequence occupies residues 1 to 16; that stretch reads MLRFLVFASLVLCGHS. A propeptide spans 17-26 (activation peptide); the sequence is TEDVPETDAR. The 238-residue stretch at 27 to 264 folds into the Peptidase S1 domain; it reads VVGGAEARRN…YISWMNNVIA (238 aa). A disulfide bridge links C56 with C72. The active-site Charge relay system is H71. Positions 85, 87, 90, and 95 each coordinate Ca(2+). N-linked (GlcNAc...) asparagine glycosylation is present at N87. D119 (charge relay system) is an active-site residue. Intrachain disulfides connect C153–C220, C184–C200, and C210–C240. S214 acts as the Charge relay system in catalysis.

This sequence belongs to the peptidase S1 family. Elastase subfamily. It depends on Ca(2+) as a cofactor.

It is found in the secreted. It carries out the reaction Hydrolysis of proteins, including elastin. Preferential cleavage: Ala-|-Xaa.. Its function is as follows. Serine proteases that hydrolyze many proteins in addition to elastin. In Mus musculus (Mouse), this protein is Chymotrypsin-like elastase family member 1 (Cela1).